Here is a 683-residue protein sequence, read N- to C-terminus: Protein kinase C eta type (683 aa).

The 118-residue stretch at 1 to 118 (MSSGTMKFNG…LRTAGTSDTF (118 aa)) folds into the C2 domain. Residues serine 28 and serine 32 each carry the phosphoserine modification. 2 consecutive Phorbol-ester/DAG-type zinc fingers follow at residues 171–222 (GHKF…VTAC) and 245–295 (PHKF…APNC). Serine 317 bears the Phosphoserine mark. A Protein kinase domain is found at 355-614 (FEFIRVLGKG…EHEILRHPFF (260 aa)). ATP contacts are provided by residues 361-369 (LGKGSFGKV) and lysine 384. Aspartate 479 serves as the catalytic Proton acceptor. Threonine 513 is subject to Phosphothreonine; by PDPK1. The AGC-kinase C-terminal domain maps to 615–683 (KEIDWVQLNH…FSYVSPELQP (69 aa)). A Phosphothreonine modification is found at threonine 656. The residue at position 675 (serine 675) is a Phosphoserine.

The protein belongs to the protein kinase superfamily. AGC Ser/Thr protein kinase family. PKC subfamily. As to quaternary structure, interacts with FYN. Interacts with RALA. Interacts with DGKQ.

It localises to the cytoplasm. It carries out the reaction L-seryl-[protein] + ATP = O-phospho-L-seryl-[protein] + ADP + H(+). The enzyme catalyses L-threonyl-[protein] + ATP = O-phospho-L-threonyl-[protein] + ADP + H(+). With respect to regulation, novel PKCs (PRKCD, PRKCE, PRKCH and PRKCQ) are calcium-insensitive, but activated by diacylglycerol (DAG) and phosphatidylserine. Three specific sites; Thr-513 (activation loop of the kinase domain), Thr-656 (turn motif) and Ser-675 (hydrophobic region), need to be phosphorylated for its full activation. Its function is as follows. Calcium-independent, phospholipid- and diacylglycerol (DAG)-dependent serine/threonine-protein kinase that is involved in the regulation of cell differentiation in keratinocytes and pre-B cell receptor, mediates regulation of epithelial tight junction integrity and foam cell formation, and is required for glioblastoma proliferation and apoptosis prevention in MCF-7 cells. In keratinocytes, binds and activates the tyrosine kinase FYN, which in turn blocks epidermal growth factor receptor (EGFR) signaling and leads to keratinocyte growth arrest and differentiation. Associates with the cyclin CCNE1-CDK2-CDKN1B complex and inhibits CDK2 kinase activity, leading to RB1 dephosphorylation and thereby G1 arrest in keratinocytes. In association with RALA activates actin depolymerization, which is necessary for keratinocyte differentiation. In the pre-B cell receptor signaling, functions downstream of BLNK by up-regulating IRF4, which in turn activates L chain gene rearrangement. Regulates epithelial tight junctions (TJs) by phosphorylating occludin (OCLN) on threonine residues, which is necessary for the assembly and maintenance of TJs. In association with PLD2 and via TLR4 signaling, is involved in lipopolysaccharide (LPS)-induced RGS2 down-regulation and foam cell formation. Upon PMA stimulation, mediates glioblastoma cell proliferation by activating the mTOR pathway, the PI3K/AKT pathway and the ERK1-dependent phosphorylation of ELK1. Involved in the protection of glioblastoma cells from irradiation-induced apoptosis by preventing caspase-9 activation. In camptothecin-treated MCF-7 cells, regulates NF-kappa-B upstream signaling by activating IKBKB, and confers protection against DNA damage-induced apoptosis. Promotes oncogenic functions of ATF2 in the nucleus while blocking its apoptotic function at mitochondria. Phosphorylates ATF2 which promotes its nuclear retention and transcriptional activity and negatively regulates its mitochondrial localization. This is Protein kinase C eta type (Prkch) from Rattus norvegicus (Rat).